Consider the following 225-residue polypeptide: Malate dehydrogenase (225 aa).

Asp1 provides a ligand contact to NAD(+). Substrate contacts are provided by Arg48 and Arg54. NAD(+)-binding positions include Asn61 and 84 to 86 (ITN). Substrate is bound by residues Asn86 and Arg120. The active-site Proton acceptor is the His144. Met194 provides a ligand contact to NAD(+).

The protein belongs to the LDH/MDH superfamily. MDH type 1 family. As to quaternary structure, homodimer.

It carries out the reaction (S)-malate + NAD(+) = oxaloacetate + NADH + H(+). Catalyzes the reversible oxidation of malate to oxaloacetate. The protein is Malate dehydrogenase (mdh) of Raoultella terrigena (Klebsiella terrigena).